The chain runs to 110 residues: UPF0473 protein SSP1146 (110 aa).

It belongs to the UPF0473 family.

In Staphylococcus saprophyticus subsp. saprophyticus (strain ATCC 15305 / DSM 20229 / NCIMB 8711 / NCTC 7292 / S-41), this protein is UPF0473 protein SSP1146.